The following is a 319-amino-acid chain: Acetyl-coenzyme A carboxylase carboxyl transferase subunit alpha (319 aa).

The region spanning 32-293 (NIQEEISRLQ…HTALAEALQT (262 aa)) is the CoA carboxyltransferase C-terminal domain.

Belongs to the AccA family. In terms of assembly, acetyl-CoA carboxylase is a heterohexamer composed of biotin carboxyl carrier protein (AccB), biotin carboxylase (AccC) and two subunits each of ACCase subunit alpha (AccA) and ACCase subunit beta (AccD).

The protein localises to the cytoplasm. The catalysed reaction is N(6)-carboxybiotinyl-L-lysyl-[protein] + acetyl-CoA = N(6)-biotinyl-L-lysyl-[protein] + malonyl-CoA. The protein operates within lipid metabolism; malonyl-CoA biosynthesis; malonyl-CoA from acetyl-CoA: step 1/1. Its function is as follows. Component of the acetyl coenzyme A carboxylase (ACC) complex. First, biotin carboxylase catalyzes the carboxylation of biotin on its carrier protein (BCCP) and then the CO(2) group is transferred by the carboxyltransferase to acetyl-CoA to form malonyl-CoA. The polypeptide is Acetyl-coenzyme A carboxylase carboxyl transferase subunit alpha (Thioalkalivibrio sulfidiphilus (strain HL-EbGR7)).